The following is a 182-amino-acid chain: PTS system glucitol/sorbitol-specific EIIC component (182 aa).

The PTS EIIC type-5 domain occupies 1 to 182 (MDAIVYFAKG…IELSNQLKAN (182 aa)). The next 3 helical transmembrane spans lie at 28–48 (GIIP…AFIG), 63–83 (VILA…NPMA), and 139–159 (TALG…AGWV).

It is found in the cell membrane. In terms of biological role, the phosphoenolpyruvate-dependent sugar phosphotransferase system (PTS), a major carbohydrate active transport system, catalyzes the phosphorylation of incoming sugar substrates concomitant with their translocation across the cell membrane. The enzyme II complex composed of SrlA, SrlB and SrlE is involved in glucitol/sorbitol transport. The polypeptide is PTS system glucitol/sorbitol-specific EIIC component (srlA) (Clostridium beijerinckii (strain ATCC 51743 / NCIMB 8052) (Clostridium acetobutylicum)).